Consider the following 338-residue polypeptide: tRNA dimethylallyltransferase (338 aa).

13–20 (GPTASGKT) serves as a coordination point for ATP. 15–20 (TASGKT) contributes to the substrate binding site. 2 interaction with substrate tRNA regions span residues 38–41 (DSTL) and 162–166 (QRVSR).

The protein belongs to the IPP transferase family. Monomer. Mg(2+) is required as a cofactor.

It carries out the reaction adenosine(37) in tRNA + dimethylallyl diphosphate = N(6)-dimethylallyladenosine(37) in tRNA + diphosphate. Its function is as follows. Catalyzes the transfer of a dimethylallyl group onto the adenine at position 37 in tRNAs that read codons beginning with uridine, leading to the formation of N6-(dimethylallyl)adenosine (i(6)A). The polypeptide is tRNA dimethylallyltransferase (Cellvibrio japonicus (strain Ueda107) (Pseudomonas fluorescens subsp. cellulosa)).